A 272-amino-acid polypeptide reads, in one-letter code: MSTRNDVHLGHKARKRFGQNFLNDPYVIDGIVSAINPLPGQNLVEIGPGLGAITEPVGREVDKFTVIELDRDLAERLRNHPELGSKLTIHEGDAMRFDFTQLIKENNKLRIFGNLPYNISTPLMFHLFEFHKDVQDMHFMLQKEVVNRLAAGPGTKAYGRLTVMAQYFCKVMPVLEVPPTAFVPPPKVDSAVVRLVPYETLPYPATNLKWLDRVCREGFNQRRKTVRNCYKALLTKEQLEELGINPSMRPENLTLEQFVNMANWLDANHSAE.

6 residues coordinate S-adenosyl-L-methionine: Asn-20, Leu-22, Gly-47, Glu-68, Asp-93, and Asn-114.

This sequence belongs to the class I-like SAM-binding methyltransferase superfamily. rRNA adenine N(6)-methyltransferase family. RsmA subfamily.

The protein resides in the cytoplasm. The enzyme catalyses adenosine(1518)/adenosine(1519) in 16S rRNA + 4 S-adenosyl-L-methionine = N(6)-dimethyladenosine(1518)/N(6)-dimethyladenosine(1519) in 16S rRNA + 4 S-adenosyl-L-homocysteine + 4 H(+). Functionally, specifically dimethylates two adjacent adenosines (A1518 and A1519) in the loop of a conserved hairpin near the 3'-end of 16S rRNA in the 30S particle. May play a critical role in biogenesis of 30S subunits. The polypeptide is Ribosomal RNA small subunit methyltransferase A (Aliivibrio fischeri (strain ATCC 700601 / ES114) (Vibrio fischeri)).